Reading from the N-terminus, the 68-residue chain is Preprofallaxidin-5 (68 aa).

An N-terminal signal peptide occupies residues 1 to 22; sequence MASLKKSLFLVLFLGFVSLSIC. Positions 23–51 are excised as a propeptide; it reads EEEKREDKEDEGENEEAEENHEERSEEKR. Positions 24–50 are disordered; that stretch reads EEKREDKEDEGENEEAEENHEERSEEK. The segment covering 30–42 has biased composition (acidic residues); it reads KEDEGENEEAEEN. At Leu64 the chain carries Leucine amide. Ser68 is a propeptide.

Belongs to the frog skin active peptide (FSAP) family. Brevinin subfamily. Expressed by the skin glands.

It is found in the secreted. The sequence is that of Preprofallaxidin-5 from Litoria fallax (Eastern dwarf tree frog).